A 329-amino-acid polypeptide reads, in one-letter code: Methionyl-tRNA formyltransferase (329 aa).

118-121 (SLLP) is a binding site for (6S)-5,6,7,8-tetrahydrofolate.

This sequence belongs to the Fmt family.

The catalysed reaction is L-methionyl-tRNA(fMet) + (6R)-10-formyltetrahydrofolate = N-formyl-L-methionyl-tRNA(fMet) + (6S)-5,6,7,8-tetrahydrofolate + H(+). In terms of biological role, attaches a formyl group to the free amino group of methionyl-tRNA(fMet). The formyl group appears to play a dual role in the initiator identity of N-formylmethionyl-tRNA by promoting its recognition by IF2 and preventing the misappropriation of this tRNA by the elongation apparatus. The chain is Methionyl-tRNA formyltransferase from Corynebacterium urealyticum (strain ATCC 43042 / DSM 7109).